Here is a 248-residue protein sequence, read N- to C-terminus: Putative insertion sequence ATP-binding protein y4uH (248 aa).

106–113 is an ATP binding site; it reads GPTGIGKS.

Belongs to the IS21/IS1162 putative ATP-binding protein family.

The sequence is that of Putative insertion sequence ATP-binding protein y4uH from Sinorhizobium fredii (strain NBRC 101917 / NGR234).